Consider the following 157-residue polypeptide: Small ribosomal subunit protein uS7 (157 aa).

The protein belongs to the universal ribosomal protein uS7 family. As to quaternary structure, part of the 30S ribosomal subunit. Contacts proteins S9 and S11.

Its function is as follows. One of the primary rRNA binding proteins, it binds directly to 16S rRNA where it nucleates assembly of the head domain of the 30S subunit. Is located at the subunit interface close to the decoding center, probably blocks exit of the E-site tRNA. The chain is Small ribosomal subunit protein uS7 from Francisella tularensis subsp. holarctica (strain OSU18).